The following is a 213-amino-acid chain: Cell division protein SepF 2 (213 aa).

The segment at 16-63 (EDDGYDGRGFDPDDDFEPELDPEPERDRRRHEPPHQSHQALHPQRDES) is disordered. The span at 27 to 39 (PDDDFEPELDPEP) shows a compositional bias: acidic residues.

This sequence belongs to the SepF family. As to quaternary structure, homodimer. Interacts with FtsZ.

The protein resides in the cytoplasm. Its function is as follows. Cell division protein that is part of the divisome complex and is recruited early to the Z-ring. Probably stimulates Z-ring formation, perhaps through the cross-linking of FtsZ protofilaments. Its function overlaps with FtsA. In Streptomyces avermitilis (strain ATCC 31267 / DSM 46492 / JCM 5070 / NBRC 14893 / NCIMB 12804 / NRRL 8165 / MA-4680), this protein is Cell division protein SepF 2.